The primary structure comprises 469 residues: Glutamate--tRNA ligase (469 aa).

The 'HIGH' region signature appears at 9-19 (PSPTGFLHVGG). The Zn(2+) site is built by Cys-98, Cys-100, Cys-125, and Asp-127. A 'KMSKS' region motif is present at residues 236-240 (KLSKR). Lys-239 contributes to the ATP binding site.

The protein belongs to the class-I aminoacyl-tRNA synthetase family. Glutamate--tRNA ligase type 1 subfamily. Monomer. Requires Zn(2+) as cofactor.

The protein resides in the cytoplasm. The catalysed reaction is tRNA(Glu) + L-glutamate + ATP = L-glutamyl-tRNA(Glu) + AMP + diphosphate. Its function is as follows. Catalyzes the attachment of glutamate to tRNA(Glu) in a two-step reaction: glutamate is first activated by ATP to form Glu-AMP and then transferred to the acceptor end of tRNA(Glu). The chain is Glutamate--tRNA ligase from Shewanella putrefaciens (strain CN-32 / ATCC BAA-453).